The sequence spans 355 residues: Protein-tyrosine sulfotransferase 1 (355 aa).

Over 1–8 (MIGKLKQN) the chain is Cytoplasmic. The helical; Signal-anchor for type II membrane protein transmembrane segment at 9–25 (LLVACLVISSVTVFYLC) threads the bilayer. Over 26 to 355 (RHAMDCHHRI…QKSPEKPNPS (330 aa)) the chain is Lumenal. Asn55 is a glycosylation site (N-linked (GlcNAc...) asparagine). Residue 76-80 (RSGTT) participates in 3'-phosphoadenylyl sulfate binding. Cys94 and Cys154 form a disulfide bridge. The Proton donor/acceptor role is filled by Glu97. Positions 99 to 103 (RVIPR) are interaction with peptide substrate. Residues Arg181, Ser189, and Arg193 each contribute to the 3'-phosphoadenylyl sulfate site. Cys223 and Cys230 are joined by a disulfide. 3'-phosphoadenylyl sulfate is bound by residues Tyr235, 282–291 (STDQVIKPVN), and Lys297. Residues 325 to 355 (HANPPNYGRPDPLVLDNTRRLQKSPEKPNPS) form a disordered region. Residues 341–355 (NTRRLQKSPEKPNPS) are compositionally biased toward basic and acidic residues.

This sequence belongs to the protein sulfotransferase family.

Its subcellular location is the golgi apparatus membrane. It catalyses the reaction L-tyrosyl-[protein] + 3'-phosphoadenylyl sulfate = O-sulfo-L-tyrosine-[protein] + adenosine 3',5'-bisphosphate + H(+). Functionally, catalyzes the O-sulfation of tyrosine residues within acidic motifs of polypeptides, using 3'-phosphoadenylyl sulfate (PAPS) as cosubstrate. The polypeptide is Protein-tyrosine sulfotransferase 1 (tpst1) (Danio rerio (Zebrafish)).